Reading from the N-terminus, the 240-residue chain is uncharacterized protein (240 aa).

Positions 1 to 30 (MNKSGMSLIITMLLLIGTAIVIGAAYYAWS) are cleaved as a signal peptide.

This is an uncharacterized protein from Methanocaldococcus jannaschii (strain ATCC 43067 / DSM 2661 / JAL-1 / JCM 10045 / NBRC 100440) (Methanococcus jannaschii).